A 287-amino-acid chain; its full sequence is Aspartate dehydrogenase domain-containing protein (287 aa).

2 positions are modified to phosphoserine: Ser24 and Ser172.

This sequence belongs to the L-aspartate dehydrogenase family.

This Mus musculus (Mouse) protein is Aspartate dehydrogenase domain-containing protein.